Here is a 489-residue protein sequence, read N- to C-terminus: Probable guanine deaminase (489 aa).

2 residues coordinate Zn(2+): His-100 and His-102. Substrate is bound by residues 102 to 105 (HVSQ), 231 to 232 (RF), 258 to 261 (HLSE), and Asp-348. Zn(2+) is bound by residues His-258 and Asp-348.

This sequence belongs to the metallo-dependent hydrolases superfamily. ATZ/TRZ family. Requires Zn(2+) as cofactor.

The protein localises to the cytoplasm. It catalyses the reaction guanine + H2O + H(+) = xanthine + NH4(+). It participates in purine metabolism; guanine degradation; xanthine from guanine: step 1/1. In terms of biological role, catalyzes the hydrolytic deamination of guanine, producing xanthine and ammonia. This is Probable guanine deaminase (GUD1) from Saccharomyces cerevisiae (strain ATCC 204508 / S288c) (Baker's yeast).